Consider the following 170-residue polypeptide: MLKKWLAGILLIMLVGYTGWNLYQTYSKKEVGIQEGQQAPDFSLKTLSGEKSSLQDAKGKKVLLNFWATWCKPCRQEMPAMEKLQKEYADKLAVVAVNFTSAEKSEKQVRAFADTYDLTFPILIDKKGINADYNVMSYPTTYILDEKGVIQDIHVGTMTKKEMEQKLDLD.

A helical transmembrane segment spans residues 5–23 (WLAGILLIMLVGYTGWNLY). Positions 33-170 (IQEGQQAPDF…KEMEQKLDLD (138 aa)) constitute a Thioredoxin domain. Cys71 and Cys74 form a disulfide bridge.

Belongs to the thioredoxin family.

The protein localises to the cell membrane. The protein is Thioredoxin-like protein YneN (yneN) of Bacillus subtilis (strain 168).